The primary structure comprises 475 residues: MNLETIIGLEVHVELKTNSKIFSASPTEFGAEPNTQTSVIDLGYPGVLPTLNKEAVNFAMKAAMALNCEIATETKFDRKNYFYPDNPKAYQISQFDKPIGENGWIEIEVDGKKKRIGITRLHLEEDAGKSTHTADGSLVDYNRQGMPLIEIVSEPDMRTPEEAYAYLEKLKSIIQYTGVSDCKMEEGSLRCDANISLRPVGQEKFGTKAELKNLNSFTYVQKGLEFEQARQEKELLSGGIIQQETRRYDEATKKTILMRVKEGSDDYRYFPEPDLVELYIDDEWKEAVRASIPELPDARKARYVAELGLPAYDAHVLTLTKEMSDFFEATVADGADAKLTSNWLMGEVLAYLNKQQKELKDVALTPAGLSKMVQLIEKGTISSKIAKKVFNELIEKGGDPEEIVKAKGLVQISDEGTLRKVVTEILDNNEQSIEDFKNGKDRAIGFLVGQIMKATKGQANPPLVNKILLEEINKR.

Belongs to the GatB/GatE family. GatB subfamily. As to quaternary structure, heterotrimer of A, B and C subunits.

It catalyses the reaction L-glutamyl-tRNA(Gln) + L-glutamine + ATP + H2O = L-glutaminyl-tRNA(Gln) + L-glutamate + ADP + phosphate + H(+). The enzyme catalyses L-aspartyl-tRNA(Asn) + L-glutamine + ATP + H2O = L-asparaginyl-tRNA(Asn) + L-glutamate + ADP + phosphate + 2 H(+). Its function is as follows. Allows the formation of correctly charged Asn-tRNA(Asn) or Gln-tRNA(Gln) through the transamidation of misacylated Asp-tRNA(Asn) or Glu-tRNA(Gln) in organisms which lack either or both of asparaginyl-tRNA or glutaminyl-tRNA synthetases. The reaction takes place in the presence of glutamine and ATP through an activated phospho-Asp-tRNA(Asn) or phospho-Glu-tRNA(Gln). This is Aspartyl/glutamyl-tRNA(Asn/Gln) amidotransferase subunit B from Bacillus cereus (strain ATCC 10987 / NRS 248).